The following is a 682-amino-acid chain: Inactive protein-arginine deiminase type-6 (682 aa).

Phosphoserine is present on residues Ser-2 and Ser-434.

It belongs to the protein arginine deiminase family. As to quaternary structure, homodimers. Associates with alpha-tubulin. Phosphorylation at Ser-2, possibly by RSK-type kinases, and Ser-434 creates binding sites for 14-3-3 proteins. As to expression, expressed at very high levels in oocytes. Weakly expressed in testis. Expressed in primordial, primary, secondary and Graafian follicles, and in immature oocytes, mature eggs and blastocyst (at protein level).

It localises to the cytoplasm. It is found in the nucleus. Its subcellular location is the cytoplasmic vesicle. The protein localises to the secretory vesicle. The protein resides in the cortical granule. Functionally, structural constituent of cytoplasmic lattices, which plays a key role in early embryonic development. Cytoplasmic lattices consist in fibrous structures found in the cytoplasm of oocytes and preimplantation embryos. They are required to store maternal proteins critical for embryonic development, such as ribosomal proteins and proteins that control epigenetic reprogramming of the preimplantation embryo, and prevent their degradation or activation. In contrast to other members of the family, does not show protein-arginine deiminase activity due to its inability to bind Ca(2+). This chain is Inactive protein-arginine deiminase type-6, found in Mus musculus (Mouse).